A 199-amino-acid chain; its full sequence is Large ribosomal subunit protein eL13A (199 aa).

2 positions are modified to phosphothreonine: threonine 144 and threonine 152.

It belongs to the eukaryotic ribosomal protein eL13 family. As to quaternary structure, component of the large ribosomal subunit (LSU). Mature yeast ribosomes consist of a small (40S) and a large (60S) subunit. The 40S small subunit contains 1 molecule of ribosomal RNA (18S rRNA) and 33 different proteins (encoded by 57 genes). The large 60S subunit contains 3 rRNA molecules (25S, 5.8S and 5S rRNA) and 46 different proteins (encoded by 81 genes).

The protein localises to the cytoplasm. Its function is as follows. Component of the ribosome, a large ribonucleoprotein complex responsible for the synthesis of proteins in the cell. The small ribosomal subunit (SSU) binds messenger RNAs (mRNAs) and translates the encoded message by selecting cognate aminoacyl-transfer RNA (tRNA) molecules. The large subunit (LSU) contains the ribosomal catalytic site termed the peptidyl transferase center (PTC), which catalyzes the formation of peptide bonds, thereby polymerizing the amino acids delivered by tRNAs into a polypeptide chain. The nascent polypeptides leave the ribosome through a tunnel in the LSU and interact with protein factors that function in enzymatic processing, targeting, and the membrane insertion of nascent chains at the exit of the ribosomal tunnel. The sequence is that of Large ribosomal subunit protein eL13A from Saccharomyces cerevisiae (strain ATCC 204508 / S288c) (Baker's yeast).